The following is a 369-amino-acid chain: MSKLQLRAVVADRRLDVEFSVSAGEVLAVLGPNGAGKSTALHVIAGLLRPDAGLVRLGDRVLTDTEAGVNVATHDRRVGLLLQDPLLFPHLSVAKNVAFGPQCRRGMFGSGRARTRASALRWLREVNAEQFADRKPRQLSGGQAQRVAIARALAAEPDVLLLDEPLTGLDVAAAAGIRSVLRSVVARSGCAVVLTTHDLLDVFTLADRVLVLESGTIAEIGPVADVLTAPRSRFGARIAGVNLVNGTIGPDGSLRTQSGAHWYGTPVQDLPTGHEAIAVFPPTAVAVYPEPPHGSPRNIVGLTVAEVDTRGPTVLVRGHDQPGGAPGLAACITVDAATELRVAPGSRVWFSVKAQEVALHPAPHQHASS.

Residues 4 to 239 enclose the ABC transporter domain; sequence LQLRAVVADR…PRSRFGARIA (236 aa). 31–38 lines the ATP pocket; sequence GPNGAGKS. The 69-residue stretch at 293 to 361 folds into the Mop domain; sequence HGSPRNIVGL…VKAQEVALHP (69 aa).

Belongs to the ABC transporter superfamily. Molybdate importer (TC 3.A.1.8) family. In terms of assembly, the complex is composed of two ATP-binding proteins (ModC), two transmembrane proteins (ModB) and a solute-binding protein (ModA).

It is found in the cell membrane. The catalysed reaction is molybdate(out) + ATP + H2O = molybdate(in) + ADP + phosphate + H(+). Functionally, part of the ABC transporter complex ModABC involved in molybdenum import. Responsible for energy coupling to the transport system. The sequence is that of Molybdenum import ATP-binding protein ModC from Mycobacterium tuberculosis (strain CDC 1551 / Oshkosh).